The primary structure comprises 507 residues: ATP synthase subunit alpha (507 aa).

Residue Gly-168–Thr-175 coordinates ATP.

It belongs to the ATPase alpha/beta chains family. In terms of assembly, F-type ATPases have 2 components, CF(1) - the catalytic core - and CF(0) - the membrane proton channel. CF(1) has five subunits: alpha(3), beta(3), gamma(1), delta(1), epsilon(1). CF(0) has three main subunits: a(1), b(2) and c(9-12). The alpha and beta chains form an alternating ring which encloses part of the gamma chain. CF(1) is attached to CF(0) by a central stalk formed by the gamma and epsilon chains, while a peripheral stalk is formed by the delta and b chains.

The protein resides in the cell membrane. It carries out the reaction ATP + H2O + 4 H(+)(in) = ADP + phosphate + 5 H(+)(out). In terms of biological role, produces ATP from ADP in the presence of a proton gradient across the membrane. The alpha chain is a regulatory subunit. In Mesomycoplasma hyopneumoniae (strain 232) (Mycoplasma hyopneumoniae), this protein is ATP synthase subunit alpha.